The chain runs to 88 residues: Large ribosomal subunit protein bL31B (88 aa).

This sequence belongs to the bacterial ribosomal protein bL31 family. Type B subfamily. Part of the 50S ribosomal subunit.

This Herminiimonas arsenicoxydans protein is Large ribosomal subunit protein bL31B.